Here is a 1196-residue protein sequence, read N- to C-terminus: Sorbin and SH3 domain-containing protein 2 (1196 aa).

Disordered regions lie at residues 25 to 57 and 75 to 95; these read VQSS…ETLN and PNLQ…GNSG. A phosphoserine mark is found at Ser-27, Ser-28, and Ser-40. Over residues 83 to 92 the composition is skewed to polar residues; it reads PTQSHITING. Phosphoserine occurs at positions 130 and 143. Met-148 carries the alanine amide modification. The 62-residue stretch at 166–227 folds into the SoHo domain; sequence VIKAPHYPGI…YNTPYTYNAG (62 aa). Residues 235-247 are compositionally biased toward polar residues; that stretch reads AQSHPAAKTQTYR. Disordered regions lie at residues 235–314 and 329–407; these read AQSH…EPGK and SSID…GDDS. Composition is skewed to basic and acidic residues over residues 252–262 and 276–312; these read SHSDNGTDAFK and RPRD…EYEP. Ser-254 bears the Phosphoserine mark. Over residues 329–343 the composition is skewed to polar residues; it reads SSIDRSLERPSSSAS. Phosphoserine occurs at positions 334, 340, 343, and 354. Residue Thr-372 is modified to Phosphothreonine. A Phosphoserine modification is found at Ser-382. Low complexity predominate over residues 382-399; sequence SSSTFTTSFISSSPSSPS. A Phosphothreonine modification is found at Thr-387. Phosphoserine occurs at positions 392, 393, 394, 396, 397, 399, 478, 589, 592, 645, 648, 844, and 938. A disordered region spans residues 929-958; it reads QDHESPRSYSSTLTDLGRSVSRERRGTPEK. Basic and acidic residues predominate over residues 948–958; sequence VSRERRGTPEK. SH3 domains follow at residues 959–1018 and 1034–1095; these read EVKL…KLTP and GEIG…VVKR. Phosphoserine is present on residues Ser-1113 and Ser-1119. One can recognise an SH3 3 domain in the interval 1137-1196; the sequence is GGGEPFQALYNYTPRNEDELELRESDVVDVMEKCDDGWFVGTSRRTKFFGTFPGNYVKRL.

In terms of assembly, interacts with ABL1/c-Abl, ABL2/v-Abl/Arg, ACTN, CBL and PALLD. Interacts with ABL, CBL, DNM1, DNM2, FLOT1, AFDN, PTK2B/PYK2, SAPAP, SPTAN1, SYNJ1, SYNJ2, VCL/vinculin and WASF. Interacts with PTPN12 and WASF1 via its SH3 domains; this interaction may mediate the partial PTPN12 and WASF1 translocation to focal adhesion sites. Ubiquitinated by CBL. Expressed in brain; found in synapses in cerebellum.

The protein localises to the cytoplasm. Its subcellular location is the perinuclear region. It is found in the apical cell membrane. It localises to the cell junction. The protein resides in the focal adhesion. The protein localises to the cell projection. Its subcellular location is the lamellipodium. In terms of biological role, adapter protein that plays a role in the assembling of signaling complexes, being a link between ABL kinases and actin cytoskeleton. Can form complex with ABL1 and CBL, thus promoting ubiquitination and degradation of ABL1. May play a role in the regulation of pancreatic cell adhesion, possibly by acting on WASF1 phosphorylation, enhancing phosphorylation by ABL1, as well as dephosphorylation by PTPN12. Isoform 2 increases water and sodium absorption in the intestine and gall-bladder. This is Sorbin and SH3 domain-containing protein 2 (Sorbs2) from Rattus norvegicus (Rat).